The primary structure comprises 116 residues: MYFTLLVVVILTAIALVAVALGIARAISPRSYNSQKGEAYECGIPTRGRSWMQFKVGYYLFAILFLMFDVETVFLFPWAVVVQDLGVYGLFSILFFLVILVLGLAYAWKKGALEWK.

3 helical membrane passes run 3 to 23, 61 to 81, and 85 to 105; these read FTLLVVVILTAIALVAVALGI, FAILFLMFDVETVFLFPWAVV, and LGVYGLFSILFFLVILVLGLA.

It belongs to the complex I subunit 3 family. NDH-1 is composed of 14 different subunits. Subunits NuoA, H, J, K, L, M, N constitute the membrane sector of the complex.

The protein localises to the cell inner membrane. It catalyses the reaction a quinone + NADH + 5 H(+)(in) = a quinol + NAD(+) + 4 H(+)(out). In terms of biological role, NDH-1 shuttles electrons from NADH, via FMN and iron-sulfur (Fe-S) centers, to quinones in the respiratory chain. The immediate electron acceptor for the enzyme in this species is believed to be a menaquinone. Couples the redox reaction to proton translocation (for every two electrons transferred, four hydrogen ions are translocated across the cytoplasmic membrane), and thus conserves the redox energy in a proton gradient. This Phocaeicola vulgatus (strain ATCC 8482 / DSM 1447 / JCM 5826 / CCUG 4940 / NBRC 14291 / NCTC 11154) (Bacteroides vulgatus) protein is NADH-quinone oxidoreductase subunit A.